The sequence spans 444 residues: Biotin carboxylase 2 (444 aa).

One can recognise a Biotin carboxylation domain in the interval 1–444 (MFTKVLIANR…VTTDFLKQHL (444 aa)). Residues Lys-116, Lys-158, 164–165 (GG), 200–203 (EKVI), His-208, and His-235 contribute to the ATP site. The 198-residue stretch at 120–317 (RKAMEAAGVP…LVEQQLRIAA (198 aa)) folds into the ATP-grasp domain. Position 237 (Lys-237) interacts with hydrogencarbonate. 2 residues coordinate ATP: Glu-275 and Glu-288. Glu-275, Glu-288, and Asn-290 together coordinate Mg(2+). Mn(2+)-binding residues include Glu-275, Glu-288, and Asn-290. Hydrogencarbonate contacts are provided by Arg-292, Val-295, and Arg-338. The active site involves Arg-292. Arg-338 serves as a coordination point for biotin.

Acetyl-CoA carboxylase is a heterohexamer of biotin carboxyl carrier protein, biotin carboxylase and the two subunits of carboxyl transferase in a 2:2 complex. The cofactor is Mg(2+). Mn(2+) serves as cofactor.

The enzyme catalyses N(6)-biotinyl-L-lysyl-[protein] + hydrogencarbonate + ATP = N(6)-carboxybiotinyl-L-lysyl-[protein] + ADP + phosphate + H(+). It participates in lipid metabolism; malonyl-CoA biosynthesis; malonyl-CoA from acetyl-CoA: step 1/1. Its function is as follows. This protein is a component of the acetyl coenzyme A carboxylase complex; first, biotin carboxylase catalyzes the carboxylation of the carrier protein and then the transcarboxylase transfers the carboxyl group to form malonyl-CoA. The sequence is that of Biotin carboxylase 2 (accC2) from Bacillus subtilis (strain 168).